The chain runs to 539 residues: Chaperonin GroEL (539 aa).

Residues 29 to 32 (TIGP), 86 to 90 (DGTTT), glycine 414, and aspartate 493 each bind ATP.

It belongs to the chaperonin (HSP60) family. Forms a cylinder of 14 subunits composed of two heptameric rings stacked back-to-back. Interacts with the co-chaperonin GroES.

It is found in the cytoplasm. It catalyses the reaction ATP + H2O + a folded polypeptide = ADP + phosphate + an unfolded polypeptide.. Together with its co-chaperonin GroES, plays an essential role in assisting protein folding. The GroEL-GroES system forms a nano-cage that allows encapsulation of the non-native substrate proteins and provides a physical environment optimized to promote and accelerate protein folding. The chain is Chaperonin GroEL from Staphylococcus aureus.